Here is a 290-residue protein sequence, read N- to C-terminus: Arginine and glutamate-rich protein 1 (290 aa).

Polar residues predominate over residues 1-10 (MGSRSRTPSP). Disordered stretches follow at residues 1–137 (MGSR…AKEL), 193–216 (ERRREQIREEERRREEDEKQKREE), and 249–290 (MDEE…PGAL). Over residues 12–28 (GKRRHHKSKHKKRSKSH) the composition is skewed to basic residues. 2 stretches are compositionally biased toward basic and acidic residues: residues 29–44 (HDHERPSTRTDRDKSS) and 53–76 (RERDRDRERDRHRSDRHTERDYRH). Phosphoserine occurs at positions 77 and 79. The segment covering 88-99 (SSSSSDSQYSEQ) has biased composition (low complexity). Residues 111–269 (FKKLDEQNQM…QEKRVKEEQK (159 aa)) are a coiled coil. Residues 124–137 (RLAEMERQRRAKEL) show a composition bias toward basic and acidic residues. Residues 249–269 (MDEERQRMRKEQEKRVKEEQK) are compositionally biased toward basic and acidic residues.

This sequence belongs to the ARGLU1 family. In terms of assembly, associates with the U1-snRNP complex; the interaction is enhanced by binding of Arglu1 to a stable intronic sequence RNA (sisRNA) produced from the Arglu1 gene by premature cleavage.

The protein resides in the nucleus. It is found in the nucleus speckle. Post-transcriptional regulator of gene expression; modulates splicing and premature cleavage at cryptic polyadenylation sites of its own pre-mRNA through binding and regulation of the U1-snRNP complex. In Drosophila melanogaster (Fruit fly), this protein is Arginine and glutamate-rich protein 1.